Reading from the N-terminus, the 456-residue chain is Phosphomannomutase (456 aa).

S98 (phosphoserine intermediate) is an active-site residue. Residues S98, D245, D247, and D249 each coordinate Mg(2+).

Belongs to the phosphohexose mutase family. It depends on Mg(2+) as a cofactor.

The enzyme catalyses alpha-D-mannose 1-phosphate = D-mannose 6-phosphate. It functions in the pathway nucleotide-sugar biosynthesis; GDP-alpha-D-mannose biosynthesis; alpha-D-mannose 1-phosphate from D-fructose 6-phosphate: step 2/2. Its pathway is bacterial outer membrane biogenesis; LPS O-antigen biosynthesis. Functionally, involved in GDP-mannose biosynthesis which serves as the activated sugar nucleotide precursor for mannose residues in cell surface polysaccharides. This enzyme participates in synthesis of the LPS O antigen. The polypeptide is Phosphomannomutase (manB) (Salmonella montevideo).